We begin with the raw amino-acid sequence, 517 residues long: Xylosidase/arabinosidase (517 aa).

The active-site Proton acceptor is the D15. Residue E185 is the Proton donor of the active site.

It belongs to the glycosyl hydrolase 43 family.

The catalysed reaction is Hydrolysis of (1-&gt;4)-beta-D-xylans, to remove successive D-xylose residues from the non-reducing termini.. It catalyses the reaction Hydrolysis of terminal non-reducing alpha-L-arabinofuranoside residues in alpha-L-arabinosides.. In terms of biological role, has a 1.6-fold higher activity as an arabinosidase than as a beta-xylosidase when tested on the substrates nitrophenyl-beta-D-xylopyranoside and P-nitrophenyl-alpha-L-arabinofuranoside. The sequence is that of Xylosidase/arabinosidase (xylB) from Butyrivibrio fibrisolvens.